The sequence spans 58 residues: uncharacterized protein (58 aa).

A run of 2 helical transmembrane segments spans residues 5-25 and 32-52; these read IAFE…IIAE and WIVV…FKMI.

It localises to the cell membrane. This is an uncharacterized protein from Methanocaldococcus jannaschii (strain ATCC 43067 / DSM 2661 / JAL-1 / JCM 10045 / NBRC 100440) (Methanococcus jannaschii).